The chain runs to 222 residues: Protein-L-isoaspartate O-methyltransferase (222 aa).

Residue S69 is part of the active site.

The protein belongs to the methyltransferase superfamily. L-isoaspartyl/D-aspartyl protein methyltransferase family.

It localises to the cytoplasm. The catalysed reaction is [protein]-L-isoaspartate + S-adenosyl-L-methionine = [protein]-L-isoaspartate alpha-methyl ester + S-adenosyl-L-homocysteine. Catalyzes the methyl esterification of L-isoaspartyl residues in peptides and proteins that result from spontaneous decomposition of normal L-aspartyl and L-asparaginyl residues. It plays a role in the repair and/or degradation of damaged proteins. The sequence is that of Protein-L-isoaspartate O-methyltransferase from Nitrosomonas europaea (strain ATCC 19718 / CIP 103999 / KCTC 2705 / NBRC 14298).